Reading from the N-terminus, the 239-residue chain is Uridylate kinase (239 aa).

10-13 serves as a coordination point for ATP; that stretch reads KLSG. The segment at 18–23 is involved in allosteric activation by GTP; sequence GEQGYG. Gly-52 contacts UMP. ATP-binding residues include Gly-53 and Arg-57. UMP-binding positions include Asp-72 and 133–140; that span reads TGNPYFST. The ATP site is built by Asn-161, Tyr-167, and Glu-170.

This sequence belongs to the UMP kinase family. In terms of assembly, homohexamer.

It is found in the cytoplasm. It carries out the reaction UMP + ATP = UDP + ADP. It participates in pyrimidine metabolism; CTP biosynthesis via de novo pathway; UDP from UMP (UMPK route): step 1/1. With respect to regulation, allosterically activated by GTP. Inhibited by UTP. Catalyzes the reversible phosphorylation of UMP to UDP. The chain is Uridylate kinase from Halalkalibacterium halodurans (strain ATCC BAA-125 / DSM 18197 / FERM 7344 / JCM 9153 / C-125) (Bacillus halodurans).